Here is an 829-residue protein sequence, read N- to C-terminus: Periplasmic nitrate reductase (829 aa).

Residues Met1–Ala29 constitute a signal peptide (tat-type signal). The 4Fe-4S Mo/W bis-MGD-type domain occupies Ile41 to Asp97. [4Fe-4S] cluster is bound by residues Cys48, Cys51, Cys55, and Cys83. Residues Lys85, Gln152, Asn177, Cys181, Trp214–Met221, Ser245–His249, Gln264–Asp266, Met374, Gln378, Asn484, Ser510–Asp511, Lys533, Asp560, and Thr718–Thr727 contribute to the Mo-bis(molybdopterin guanine dinucleotide) site. Phe794 serves as a coordination point for substrate. The Mo-bis(molybdopterin guanine dinucleotide) site is built by Asn802 and Lys819.

It belongs to the prokaryotic molybdopterin-containing oxidoreductase family. NasA/NapA/NarB subfamily. As to quaternary structure, component of the periplasmic nitrate reductase NapAB complex composed of NapA and NapB. [4Fe-4S] cluster serves as cofactor. Requires Mo-bis(molybdopterin guanine dinucleotide) as cofactor. In terms of processing, predicted to be exported by the Tat system. The position of the signal peptide cleavage has not been experimentally proven.

The protein resides in the periplasm. It carries out the reaction 2 Fe(II)-[cytochrome] + nitrate + 2 H(+) = 2 Fe(III)-[cytochrome] + nitrite + H2O. Catalytic subunit of the periplasmic nitrate reductase complex NapAB. Receives electrons from NapB and catalyzes the reduction of nitrate to nitrite. This is Periplasmic nitrate reductase from Vibrio campbellii (strain ATCC BAA-1116).